The primary structure comprises 325 residues: Tartrate-resistant acid phosphatase type 5 (325 aa).

Residues 1 to 21 (MDMWTALLILQALLLPSLADG) form the signal peptide. Fe cation is bound by residues aspartate 33, aspartate 71, tyrosine 74, and asparagine 110. N-linked (GlcNAc...) asparagine glycosylation is found at asparagine 116 and asparagine 147. The cysteines at positions 161 and 219 are disulfide-linked. Residues histidine 205, histidine 240, and histidine 242 each contribute to the Fe cation site.

It belongs to the metallophosphoesterase superfamily. Purple acid phosphatase family. As to quaternary structure, exists either as monomer or, after proteolytic processing, as a dimer of two chains linked by disulfide bond(s). Requires Fe cation as cofactor.

The protein localises to the lysosome. The catalysed reaction is a phosphate monoester + H2O = an alcohol + phosphate. In terms of biological role, involved in osteopontin/bone sialoprotein dephosphorylation. Its expression seems to increase in certain pathological states such as Gaucher and Hodgkin diseases, the hairy cell, the B-cell, and the T-cell leukemias. The polypeptide is Tartrate-resistant acid phosphatase type 5 (ACP5) (Homo sapiens (Human)).